Reading from the N-terminus, the 61-residue chain is Bactridin-1 (61 aa).

An LCN-type CS-alpha/beta domain is found at 1 to 61; the sequence is KDGYIIEHRG…KIFDSNNLKC (61 aa). Cystine bridges form between C11–C61, C15–C37, C23–C42, and C27–C44.

The protein belongs to the long (4 C-C) scorpion toxin superfamily. Sodium channel inhibitor family. Beta subfamily. In terms of tissue distribution, expressed by the venom gland.

It is found in the secreted. Its function is as follows. Shows antibacterial activity against both Gram-positive bacteria (B.subtilis, M.luteus, E.faecalis) and Gram-negative bacteria (P.aeruginosa, Y.enterocolitica, A.calcoaceticus). Modifies membrane sodium permeability on Y.enterocolitica. Is toxic to cockroaches and crabs, but is not toxic to mice. Does not induce haemolysis in human erythrocytes. Acts by inhibiting the sodium (Nav) currents. In Tityus discrepans (Venezuelan scorpion), this protein is Bactridin-1.